The primary structure comprises 225 residues: Uracil-DNA glycosylase (225 aa).

Aspartate 67 (proton acceptor) is an active-site residue.

It belongs to the uracil-DNA glycosylase (UDG) superfamily. UNG family.

The protein resides in the cytoplasm. The catalysed reaction is Hydrolyzes single-stranded DNA or mismatched double-stranded DNA and polynucleotides, releasing free uracil.. Its function is as follows. Excises uracil residues from the DNA which can arise as a result of misincorporation of dUMP residues by DNA polymerase or due to deamination of cytosine. This is Uracil-DNA glycosylase from Coxiella burnetii (strain Dugway 5J108-111).